A 376-amino-acid polypeptide reads, in one-letter code: UPF0754 membrane protein Sca_1420 (376 aa).

2 consecutive transmembrane segments (helical) span residues 4 to 24 and 356 to 376; these read FLVILFMIVIGALIGGITNII and LLGFLLGGIIGCLQGIIALFV.

Belongs to the UPF0754 family.

It localises to the cell membrane. The protein is UPF0754 membrane protein Sca_1420 of Staphylococcus carnosus (strain TM300).